A 141-amino-acid chain; its full sequence is Transcription antitermination protein NusB (141 aa).

This sequence belongs to the NusB family.

Involved in transcription antitermination. Required for transcription of ribosomal RNA (rRNA) genes. Binds specifically to the boxA antiterminator sequence of the ribosomal RNA (rrn) operons. This chain is Transcription antitermination protein NusB, found in Fervidobacterium nodosum (strain ATCC 35602 / DSM 5306 / Rt17-B1).